Here is a 189-residue protein sequence, read N- to C-terminus: UPF0398 protein lhv_1265 (189 aa).

Belongs to the UPF0398 family.

This is UPF0398 protein lhv_1265 from Lactobacillus helveticus (strain DPC 4571).